We begin with the raw amino-acid sequence, 119 residues long: MNLAAYYPVLLFLLVGTGLGIALVSIGKLLGPNKPDVDKNAPYECGFEAFEDARMKFDVRYYLVAILFIIFDLETAFLFPWGVALRDIGWPGFSAMMIFLLEFLLGFAYIWKKGGLDWE.

Helical transmembrane passes span 7 to 27, 63 to 83, and 88 to 108; these read YPVL…VSIG, LVAI…PWGV, and IGWP…LGFA.

Belongs to the complex I subunit 3 family. In terms of assembly, NDH-1 is composed of 14 different subunits. Subunits NuoA, H, J, K, L, M, N constitute the membrane sector of the complex.

The protein resides in the cell inner membrane. The catalysed reaction is a quinone + NADH + 5 H(+)(in) = a quinol + NAD(+) + 4 H(+)(out). Functionally, NDH-1 shuttles electrons from NADH, via FMN and iron-sulfur (Fe-S) centers, to quinones in the respiratory chain. The immediate electron acceptor for the enzyme in this species is believed to be ubiquinone. Couples the redox reaction to proton translocation (for every two electrons transferred, four hydrogen ions are translocated across the cytoplasmic membrane), and thus conserves the redox energy in a proton gradient. The polypeptide is NADH-quinone oxidoreductase subunit A (Burkholderia vietnamiensis (strain G4 / LMG 22486) (Burkholderia cepacia (strain R1808))).